We begin with the raw amino-acid sequence, 279 residues long: Thymidylate synthase (279 aa).

Arg-29 is a dUMP binding site. His-59 serves as a coordination point for (6R)-5,10-methylene-5,6,7,8-tetrahydrofolate. 134 to 135 (RR) contacts dUMP. Cys-154 (nucleophile) is an active-site residue. DUMP contacts are provided by residues 181–184 (RSAD), Asn-192, and 222–224 (HIY). Asp-184 serves as a coordination point for (6R)-5,10-methylene-5,6,7,8-tetrahydrofolate. Ala-278 is a (6R)-5,10-methylene-5,6,7,8-tetrahydrofolate binding site.

Belongs to the thymidylate synthase family. Bacterial-type ThyA subfamily. In terms of assembly, homodimer.

Its subcellular location is the cytoplasm. The enzyme catalyses dUMP + (6R)-5,10-methylene-5,6,7,8-tetrahydrofolate = 7,8-dihydrofolate + dTMP. The protein operates within pyrimidine metabolism; dTTP biosynthesis. Functionally, catalyzes the reductive methylation of 2'-deoxyuridine-5'-monophosphate (dUMP) to 2'-deoxythymidine-5'-monophosphate (dTMP) while utilizing 5,10-methylenetetrahydrofolate (mTHF) as the methyl donor and reductant in the reaction, yielding dihydrofolate (DHF) as a by-product. This enzymatic reaction provides an intracellular de novo source of dTMP, an essential precursor for DNA biosynthesis. The polypeptide is Thymidylate synthase (Paracidovorax citrulli (strain AAC00-1) (Acidovorax citrulli)).